A 324-amino-acid chain; its full sequence is Putative F-box/kelch-repeat protein At5g28160 (324 aa).

An F-box domain is found at 7–54 (RPSFLSLPDEIILSCLARISRSYYPKLSLVCKTFRTLLISNELIVARL). Residues 170–216 (KIYVMGGCMADESVNWGEVFDIKTQTWEALPDPGPEFRFSSIRKIDV) form a Kelch repeat.

This chain is Putative F-box/kelch-repeat protein At5g28160, found in Arabidopsis thaliana (Mouse-ear cress).